Here is a 509-residue protein sequence, read N- to C-terminus: ATP synthase subunit alpha (509 aa).

169 to 176 provides a ligand contact to ATP; the sequence is GDRQTGKT.

It belongs to the ATPase alpha/beta chains family. As to quaternary structure, F-type ATPases have 2 components, CF(1) - the catalytic core - and CF(0) - the membrane proton channel. CF(1) has five subunits: alpha(3), beta(3), gamma(1), delta(1), epsilon(1). CF(0) has three main subunits: a(1), b(2) and c(9-12). The alpha and beta chains form an alternating ring which encloses part of the gamma chain. CF(1) is attached to CF(0) by a central stalk formed by the gamma and epsilon chains, while a peripheral stalk is formed by the delta and b chains.

The protein resides in the cell inner membrane. The catalysed reaction is ATP + H2O + 4 H(+)(in) = ADP + phosphate + 5 H(+)(out). In terms of biological role, produces ATP from ADP in the presence of a proton gradient across the membrane. The alpha chain is a regulatory subunit. The sequence is that of ATP synthase subunit alpha from Chelativorans sp. (strain BNC1).